Here is a 262-residue protein sequence, read N- to C-terminus: Ninja-family protein 3 (262 aa).

Positions 48–69 (RRNSLTCNTSKEAAGQSPEEMN) are disordered.

This sequence belongs to the Ninja family.

Its subcellular location is the nucleus. The polypeptide is Ninja-family protein 3 (Zea mays (Maize)).